We begin with the raw amino-acid sequence, 172 residues long: Disulfide bond formation protein B (172 aa).

Over 1 to 11 the chain is Cytoplasmic; it reads MNPFRWSFRAQ. The chain crosses the membrane as a helical span at residues 12-28; that stretch reads FLLGFLACAGLLAYAIY. At 29–46 the chain is on the periplasmic side; sequence VQLHLGLEPCPLCIFQRI. Cysteine 38 and cysteine 41 are joined by a disulfide. The chain crosses the membrane as a helical span at residues 47 to 63; it reads AFAALAVFFLLGALHGP. The Cytoplasmic segment spans residues 64 to 70; it reads RAAAGRK. A helical membrane pass occupies residues 71–88; the sequence is VYGVLSFIAAGVGMGIAA. At 89–145 the chain is on the periplasmic side; sequence RHVWVQIRPKDMMSSCGPPLSFLSETMGPFEVFRTVLTGTGDCGNIDWRFLGLSMPM. Cysteine 104 and cysteine 131 are disulfide-bonded. The chain crosses the membrane as a helical span at residues 146 to 164; that stretch reads WSMVWFVGLALWALYAGFK. Residues 165–172 are Cytoplasmic-facing; the sequence is VRRSSVHH.

The protein belongs to the DsbB family.

It localises to the cell inner membrane. In terms of biological role, required for disulfide bond formation in some periplasmic proteins. Acts by oxidizing the DsbA protein. This is Disulfide bond formation protein B from Xanthomonas axonopodis pv. citri (strain 306).